A 557-amino-acid chain; its full sequence is 2-isopropylmalate synthase (557 aa).

Residues P31–L304 enclose the Pyruvate carboxyltransferase domain. Mg(2+) is bound by residues D40, H243, H245, and N279. Residues I439–V557 form a regulatory domain region.

It belongs to the alpha-IPM synthase/homocitrate synthase family. LeuA type 2 subfamily. As to quaternary structure, homodimer. Requires Mg(2+) as cofactor.

Its subcellular location is the cytoplasm. It catalyses the reaction 3-methyl-2-oxobutanoate + acetyl-CoA + H2O = (2S)-2-isopropylmalate + CoA + H(+). It participates in amino-acid biosynthesis; L-leucine biosynthesis; L-leucine from 3-methyl-2-oxobutanoate: step 1/4. In terms of biological role, catalyzes the condensation of the acetyl group of acetyl-CoA with 3-methyl-2-oxobutanoate (2-ketoisovalerate) to form 3-carboxy-3-hydroxy-4-methylpentanoate (2-isopropylmalate). This is 2-isopropylmalate synthase from Desulfitobacterium hafniense (strain Y51).